Consider the following 163-residue polypeptide: MLLAIKDFFNSLLLKELFKGMALTGRYLFARKITVQFPEEKTPMSPRFRGLHALRRYPNGEERCIACKLCEAVCPALAISIESDVRNDGTRRTTRYDIDLTKCIFCGFCEEACPVDAIVETHILEYHGEKRGDLYFTKDMLLAVGDRYEPQIAAAKAADAKYR.

4Fe-4S ferredoxin-type domains lie at 54 to 84 and 94 to 123; these read LRRYPNGEERCIACKLCEAVCPALAISIESD and TRYDIDLTKCIFCGFCEEACPVDAIVETHI. 8 residues coordinate [4Fe-4S] cluster: Cys64, Cys67, Cys70, Cys74, Cys103, Cys106, Cys109, and Cys113.

It belongs to the complex I 23 kDa subunit family. As to quaternary structure, NDH-1 is composed of 14 different subunits. Subunits NuoA, H, J, K, L, M, N constitute the membrane sector of the complex. It depends on [4Fe-4S] cluster as a cofactor.

It localises to the cell inner membrane. The catalysed reaction is a quinone + NADH + 5 H(+)(in) = a quinol + NAD(+) + 4 H(+)(out). Its function is as follows. NDH-1 shuttles electrons from NADH, via FMN and iron-sulfur (Fe-S) centers, to quinones in the respiratory chain. The immediate electron acceptor for the enzyme in this species is believed to be ubiquinone. Couples the redox reaction to proton translocation (for every two electrons transferred, four hydrogen ions are translocated across the cytoplasmic membrane), and thus conserves the redox energy in a proton gradient. This is NADH-quinone oxidoreductase subunit I from Cupriavidus metallidurans (strain ATCC 43123 / DSM 2839 / NBRC 102507 / CH34) (Ralstonia metallidurans).